A 361-amino-acid polypeptide reads, in one-letter code: Chorismate synthase (361 aa).

The interval 37-59 (TEEDLQHDLDRRRPGTSRYTTPR) is disordered. A compositionally biased stretch (basic and acidic residues) spans 40-49 (DLQHDLDRRR). Residues R48 and R54 each contribute to the NADP(+) site. FMN contacts are provided by residues 125 to 127 (RSS), 238 to 239 (NA), G278, 293 to 297 (KPTSS), and R319.

It belongs to the chorismate synthase family. In terms of assembly, homotetramer. It depends on FMNH2 as a cofactor.

The catalysed reaction is 5-O-(1-carboxyvinyl)-3-phosphoshikimate = chorismate + phosphate. Its pathway is metabolic intermediate biosynthesis; chorismate biosynthesis; chorismate from D-erythrose 4-phosphate and phosphoenolpyruvate: step 7/7. Its function is as follows. Catalyzes the anti-1,4-elimination of the C-3 phosphate and the C-6 proR hydrogen from 5-enolpyruvylshikimate-3-phosphate (EPSP) to yield chorismate, which is the branch point compound that serves as the starting substrate for the three terminal pathways of aromatic amino acid biosynthesis. This reaction introduces a second double bond into the aromatic ring system. The chain is Chorismate synthase from Erwinia tasmaniensis (strain DSM 17950 / CFBP 7177 / CIP 109463 / NCPPB 4357 / Et1/99).